The chain runs to 257 residues: Aquaporin TIP4-2 (257 aa).

Helical transmembrane passes span 32-52 and 63-83; these read LVLT…AGAG and TLAA…TAGF. The short motif at 91–93 is the NPA 1 element; the sequence is NPA. Helical transmembrane passes span 107 to 127, 150 to 170, and 178 to 198; these read LRAL…CILL, GLVM…AMIL, and TIGP…GGNF. An NPA 2 motif is present at residues 204–206; it reads NPA. The helical transmembrane segment at 225 to 245 threads the bilayer; the sequence is WIGPLLGGSLAGFVYESLFMV.

The protein belongs to the MIP/aquaporin (TC 1.A.8) family. TIP (TC 1.A.8.10) subfamily.

The protein resides in the vacuole membrane. Functionally, aquaporins facilitate the transport of water and small neutral solutes across cell membranes. This is Aquaporin TIP4-2 (TIP4-2) from Zea mays (Maize).